Consider the following 258-residue polypeptide: F-box/LRR-repeat protein 25 (258 aa).

An F-box domain is found at 27–76; that stretch reads SDSISNLPDEILHHILSFIPETNLVIRTSVLSKRWRHVWSKTPHLSFEWL. LRR repeat units lie at residues 101–130, 136–161, 177–202, and 224–249; these read CTSY…SLAF, CNKF…SLTP, RCNL…SLKF, and RRSC…RLRD.

The chain is F-box/LRR-repeat protein 25 (FBL25) from Arabidopsis thaliana (Mouse-ear cress).